The primary structure comprises 296 residues: UDP-N-acetylglucosamine transporter TMEM241 homolog (296 aa).

A run of 10 helical transmembrane segments spans residues 7–29 (AVGL…VLSV), 41–61 (WQTL…WLEI), 67–87 (SDVV…YAGS), 93–113 (LPIP…YGFQ), 126–146 (IFSI…DPQF), 147–167 (DADG…YKVF), 187–207 (VFSV…ISAL), 217–237 (FHSG…ASVK), 248–266 (ASWN…LIYF), and 272–291 (VPLT…LVYA).

Belongs to the nucleotide-sugar transporter family. SLC35A subfamily.

It is found in the golgi apparatus. Its subcellular location is the cis-Golgi network membrane. Functionally, golgi-localized UDP-N-acetylglucosamine (UDP-GlcNAc) transporter that transports UDP-N-acetylglucosamine into Golgi lumen. The protein is UDP-N-acetylglucosamine transporter TMEM241 homolog (tmem241) of Xenopus laevis (African clawed frog).